A 341-amino-acid polypeptide reads, in one-letter code: tRNA N6-adenosine threonylcarbamoyltransferase (341 aa).

2 residues coordinate Fe cation: His-115 and His-119. Substrate is bound by residues Val-138 to Gly-142, Asp-171, Gly-184, Asp-188, and Asn-279. Position 307 (Asp-307) interacts with Fe cation.

This sequence belongs to the KAE1 / TsaD family. The cofactor is Fe(2+).

Its subcellular location is the cytoplasm. It catalyses the reaction L-threonylcarbamoyladenylate + adenosine(37) in tRNA = N(6)-L-threonylcarbamoyladenosine(37) in tRNA + AMP + H(+). Functionally, required for the formation of a threonylcarbamoyl group on adenosine at position 37 (t(6)A37) in tRNAs that read codons beginning with adenine. Is involved in the transfer of the threonylcarbamoyl moiety of threonylcarbamoyl-AMP (TC-AMP) to the N6 group of A37, together with TsaE and TsaB. TsaD likely plays a direct catalytic role in this reaction. The sequence is that of tRNA N6-adenosine threonylcarbamoyltransferase from Clostridium kluyveri (strain NBRC 12016).